The primary structure comprises 1069 residues: Carbamoyl phosphate synthase large chain (1069 aa).

The carboxyphosphate synthetic domain stretch occupies residues 1 to 401 (MPLNKDIKRV…AFLKGIRSLE (401 aa)). 12 residues coordinate ATP: Arg129, Arg169, Gly175, Gly176, Lys208, Val210, Glu215, Gly241, Ile242, His243, Gln284, and Glu298. The ATP-grasp 1 domain maps to 133–327 (RDMMNRIGEP…IAKLAAKIAL (195 aa)). 3 residues coordinate Mg(2+): Gln284, Glu298, and Asn300. The Mn(2+) site is built by Gln284, Glu298, and Asn300. The oligomerization domain stretch occupies residues 402-549 (IGKYSLDHKK…YSTYEQYDEV (148 aa)). The segment at 550–932 (EVSNRRKVIV…ALYKGFVGAN (383 aa)) is carbamoyl phosphate synthetic domain. In terms of domain architecture, ATP-grasp 2 spans 674 to 864 (DELLERLDIS…IVDIATQVML (191 aa)). The ATP site is built by Arg710, Lys749, Leu751, Glu755, Gly780, Val781, His782, Ser783, Gln823, and Glu835. Mg(2+) contacts are provided by Gln823, Glu835, and Asn837. Residues Gln823, Glu835, and Asn837 each coordinate Mn(2+). The 138-residue stretch at 932 to 1069 (NMYPSKEKGK…KDLEVFDITK (138 aa)) folds into the MGS-like domain. Positions 933 to 1069 (MYPSKEKGKI…KDLEVFDITK (137 aa)) are allosteric domain.

The protein belongs to the CarB family. In terms of assembly, composed of two chains; the small (or glutamine) chain promotes the hydrolysis of glutamine to ammonia, which is used by the large (or ammonia) chain to synthesize carbamoyl phosphate. Tetramer of heterodimers (alpha,beta)4. It depends on Mg(2+) as a cofactor. Requires Mn(2+) as cofactor.

It catalyses the reaction hydrogencarbonate + L-glutamine + 2 ATP + H2O = carbamoyl phosphate + L-glutamate + 2 ADP + phosphate + 2 H(+). It carries out the reaction hydrogencarbonate + NH4(+) + 2 ATP = carbamoyl phosphate + 2 ADP + phosphate + 2 H(+). It functions in the pathway amino-acid biosynthesis; L-arginine biosynthesis; carbamoyl phosphate from bicarbonate: step 1/1. The protein operates within pyrimidine metabolism; UMP biosynthesis via de novo pathway; (S)-dihydroorotate from bicarbonate: step 1/3. Large subunit of the glutamine-dependent carbamoyl phosphate synthetase (CPSase). CPSase catalyzes the formation of carbamoyl phosphate from the ammonia moiety of glutamine, carbonate, and phosphate donated by ATP, constituting the first step of 2 biosynthetic pathways, one leading to arginine and/or urea and the other to pyrimidine nucleotides. The large subunit (synthetase) binds the substrates ammonia (free or transferred from glutamine from the small subunit), hydrogencarbonate and ATP and carries out an ATP-coupled ligase reaction, activating hydrogencarbonate by forming carboxy phosphate which reacts with ammonia to form carbamoyl phosphate. This chain is Carbamoyl phosphate synthase large chain, found in Clostridium botulinum (strain Alaska E43 / Type E3).